We begin with the raw amino-acid sequence, 70 residues long: Venom antimicrobial peptide-6 (70 aa).

Residues 1–23 (MKSQTFFLLFLVVFLLAITQSEA) form the signal peptide. Position 36 is a phenylalanine amide (Phe36). Residues 40 to 70 (SLRDMDTMKYLYDPSLSAADLKTLQKLMENY) constitute a propeptide that is removed on maturation.

Belongs to the non-disulfide-bridged peptide (NDBP) superfamily. Short antimicrobial peptide (group 4) family. In terms of tissue distribution, expressed by the venom gland.

Its subcellular location is the secreted. It is found in the target cell membrane. Its function is as follows. Amphipathic peptide that exhibits extensive cytolytic activities against both prokaryotic and eukaryotic cells. Is more potent against Gram-positive bacteria (lethal concentration (LC)=0.25-2.9 uM) than against Gram-negative bacteria (LC=6.2-&gt;50 uM), and fungi ((LC)=14.1-&gt;50 uM). Shows hemolytic activity against rabbit erythrocytes (37.7% of inhibition at 6.25 uM) and cytolysis against rat dorsal root ganglions. In vivo, intravenous injection into mice tail provokes uncomfortable symptoms with a death rate of 12.5%. In Mesobuthus eupeus (Lesser Asian scorpion), this protein is Venom antimicrobial peptide-6.